The sequence spans 258 residues: UPF0758 protein Bamb_2548 (258 aa).

The segment at 1–43 is disordered; it reads MLSPCLAAPATECRDPADAPAAPARHTGPARPRKRRPRNWKPH. Basic residues predominate over residues 31–43; that stretch reads RPRKRRPRNWKPH. The 123-residue stretch at 136-258 folds into the MPN domain; sequence QIDSPGAVED…TFSFARAGWL (123 aa). Zn(2+) is bound by residues His-207, His-209, and Asp-220. Positions 207-220 match the JAMM motif motif; that stretch reads HNHPSGAVQPSAED.

Belongs to the UPF0758 family.

This is UPF0758 protein Bamb_2548 from Burkholderia ambifaria (strain ATCC BAA-244 / DSM 16087 / CCUG 44356 / LMG 19182 / AMMD) (Burkholderia cepacia (strain AMMD)).